Here is a 475-residue protein sequence, read N- to C-terminus: Ataxin-10 (475 aa).

R10 bears the Omega-N-methylarginine mark. S12 is subject to Phosphoserine; by AURKB. The residue at position 77 (S77) is a Phosphoserine; by PLK1. At T82 the chain carries Phosphothreonine; by PLK1. Phosphoserine is present on S430.

It belongs to the ataxin-10 family. As to quaternary structure, homooligomer. Interacts with GNB2. Interacts with IQCB1. Interacts with OGT. Polyubiquitinated. In terms of processing, phosphorylation at Ser-12 by AURKB promotes the association of ATXN10 with PLK1. Phosphorylation at Ser-77 and Thr-82 by PLK1 may play a role in the regulation of cytokinesis and may stimulate the proteasome-mediated degradation of ATXN10. In terms of tissue distribution, expressed in the central nervous system.

The protein localises to the cytoplasm. It is found in the perinuclear region. Its subcellular location is the midbody. It localises to the cytoskeleton. The protein resides in the cilium basal body. The protein localises to the microtubule organizing center. It is found in the centrosome. Its subcellular location is the centriole. Functionally, may play a role in the regulation of cytokinesis. May play a role in signaling by stimulating protein glycosylation. Induces neuritogenesis by activating the Ras-MAP kinase pathway and is necessary for the survival of cerebellar neurons. Does not appear to play a major role in ciliogenesis. The sequence is that of Ataxin-10 (ATXN10) from Homo sapiens (Human).